Consider the following 512-residue polypeptide: Maturase K (512 aa).

This sequence belongs to the intron maturase 2 family. MatK subfamily.

The protein resides in the plastid. It localises to the chloroplast. Its function is as follows. Usually encoded in the trnK tRNA gene intron. Probably assists in splicing its own and other chloroplast group II introns. This is Maturase K from Lilium henryi (Henry's lily).